A 155-amino-acid chain; its full sequence is Small ribosomal subunit protein uS7 (155 aa).

It belongs to the universal ribosomal protein uS7 family. As to quaternary structure, part of the 30S ribosomal subunit. Contacts proteins S9 and S11.

In terms of biological role, one of the primary rRNA binding proteins, it binds directly to 16S rRNA where it nucleates assembly of the head domain of the 30S subunit. Is located at the subunit interface close to the decoding center, probably blocks exit of the E-site tRNA. This is Small ribosomal subunit protein uS7 from Lactococcus lactis subsp. lactis (strain IL1403) (Streptococcus lactis).